The following is a 373-amino-acid chain: Glutamine synthetase (373 aa).

Ala2 is subject to N-acetylalanine. The required for glutamine-induced ubiquitination by CRL4(CRBN) and proteasomal degradation stretch occupies residues 2–25 (ATSASSHLNKGIKQMYMSLPQGEK). N6-acetyllysine occurs at positions 11 and 14. Residues 24-106 (EKVQAMYIWV…VFCEVFKYNQ (83 aa)) enclose the GS beta-grasp domain. Tyr104 carries the post-translational modification Phosphotyrosine. The 261-residue stretch at 113 to 373 (LRHTCKRIMD…TGDQPFQYKN (261 aa)) folds into the GS catalytic domain. Glu134 provides a ligand contact to ATP. Glu134, Glu136, Glu196, and Glu203 together coordinate Mn(2+). 203–208 (EFQIGP) contributes to the ATP binding site. 246–247 (NW) contributes to the L-glutamate binding site. Position 253 (His253) interacts with Mn(2+). ATP contacts are provided by residues 255–257 (NFS), Arg319, and Arg324. L-glutamate is bound at residue Arg319. ADP is bound at residue 336 to 338 (YFE). Glu338 contributes to the Mn(2+) binding site. Residue Arg340 coordinates L-glutamate. Ser343 carries the phosphoserine modification.

This sequence belongs to the glutamine synthetase family. In terms of assembly, decamer; composed of two pentamers. Interacts with PALMD. Interacts with RHOJ. Interacts with BEST2; this interaction tethers a fraction of GLUL to the membrane, causing a decrease of cytosolic glutamine synthase (GS) activity and inhibits the chloride channel activity of BEST2 by affecting the gating at the aperture in the absence of intracellular glutamate. The cofactor is Mg(2+). Mn(2+) serves as cofactor. Palmitoylated; undergoes autopalmitoylation. Post-translationally, acetylated by EP300/p300; acetylation is stimulated by increased glutamine levels and promotes ubiquitin-mediated proteasomal degradation. In terms of processing, ubiquitinated by ZNRF1. Ubiquitinated by the DCX (DDB1-CUL4-X-box) E3 ubiquitin-protein ligase complex called CRL4(CRBN), leading to proteasomal degradation.

Its subcellular location is the cytoplasm. It localises to the cytosol. The protein localises to the microsome. It is found in the mitochondrion. The protein resides in the cell membrane. It carries out the reaction L-glutamate + NH4(+) + ATP = L-glutamine + ADP + phosphate + H(+). The catalysed reaction is L-cysteinyl-[protein] + hexadecanoyl-CoA = S-hexadecanoyl-L-cysteinyl-[protein] + CoA. Glutamine synthetase activity is inhibited by methionine sulfoximine (MSO). Its function is as follows. Glutamine synthetase that catalyzes the ATP-dependent conversion of glutamate and ammonia to glutamine. Its role depends on tissue localization: in the brain, it regulates the levels of toxic ammonia and converts neurotoxic glutamate to harmless glutamine, whereas in the liver, it is one of the enzymes responsible for the removal of ammonia. Plays a key role in ammonium detoxification during erythropoiesis: the glutamine synthetase activity is required to remove ammonium generated by porphobilinogen deaminase (HMBS) during heme biosynthesis to prevent ammonium accumulation and oxidative stress. Essential for proliferation of fetal skin fibroblasts. Independently of its glutamine synthetase activity, required for endothelial cell migration during vascular development. Involved in angiogenesis by regulating membrane localization and activation of the GTPase RHOJ, possibly by promoting RHOJ palmitoylation. May act as a palmitoyltransferase for RHOJ: able to autopalmitoylate and then transfer the palmitoyl group to RHOJ. Plays a role in ribosomal 40S subunit biogenesis. Through the interaction with BEST2, inhibits BEST2 channel activity by affecting the gating at the aperture in the absence of intracellular L-glutamate, but sensitizes BEST2 to intracellular L-glutamate, which promotes the opening of BEST2 and thus relieves its inhibitory effect on BEST2. This chain is Glutamine synthetase, found in Cricetulus griseus (Chinese hamster).